The sequence spans 20 residues: Fibrinolytic zinc metalloproteinase (20 aa).

The Peptidase M12B domain occupies 7 to 20; that stretch reads RYVQLVITVDHVMN.

Zn(2+) serves as cofactor.

The protein localises to the secreted. Functionally, hydrolyzes alpha and beta chains of human fibrinogen and human fibrin. No activity against the gamma chain of human fibrinogen, human thrombin, bovine serum albumin, ovalbumin and hemoglobin. Has anticoagulant activity on human plasma and protects mice against death due from experimentally induced platelet thromboembolism with an ED(50) of 40 ug/kg. The sequence is that of Fibrinolytic zinc metalloproteinase from Ganoderma lucidum (Ling zhi medicinal fungus).